A 1056-amino-acid polypeptide reads, in one-letter code: RNA cytidine acetyltransferase (1056 aa).

ATP is bound at residue 286–295 (GRGKSAALGI). Polar residues predominate over residues 433–446 (QNNTSGRESTQTAV). Residues 433 to 463 (QNNTSGRESTQTAVVSRDNKEKDSHLHSQSR) are disordered. A compositionally biased stretch (basic and acidic residues) spans 449–463 (RDNKEKDSHLHSQSR). Residue Arg475 participates in ATP binding. In terms of domain architecture, N-acetyltransferase spans 566-706 (VLLPPIDPKD…VKLRDAKTLP (141 aa)). Acetyl-CoA is bound by residues 638 to 640 (IAT), 645 to 651 (ASMGYGS), and Asn739. Phosphoserine occurs at positions 1001, 1007, and 1010.

Belongs to the RNA cytidine acetyltransferase family. NAT10 subfamily. As to quaternary structure, interacts with TAN1. Associates with 90S pre-ribosomal particles.

It is found in the nucleus. Its subcellular location is the nucleolus. It catalyses the reaction a cytidine in 18S rRNA + acetyl-CoA + ATP + H2O = an N(4)-acetylcytidine in 18S rRNA + ADP + phosphate + CoA + H(+). It carries out the reaction a cytidine in tRNA + acetyl-CoA + ATP + H2O = an N(4)-acetylcytidine in tRNA + ADP + phosphate + CoA + H(+). Functionally, RNA cytidine acetyltransferase with specificity toward both 18S rRNA and tRNAs. Catalyzes the formation of N(4)-acetylcytidine (ac4C) at positions 1280 and 1773 in 18S rRNA. Required for early nucleolar cleavages of precursor rRNA at sites A0, A1 and A2 during 18S rRNA synthesis. Catalyzes the formation of ac4C at position 12 in serine and leucine tRNAs. Requires the tRNA-binding adapter protein TAN1 for full tRNA acetyltransferase activity but not for 18S rRNA acetylation. In Saccharomyces cerevisiae (strain ATCC 204508 / S288c) (Baker's yeast), this protein is RNA cytidine acetyltransferase.